The chain runs to 446 residues: Trigger factor (446 aa).

The PPIase FKBP-type domain maps to glycine 163–leucine 248.

The protein belongs to the FKBP-type PPIase family. Tig subfamily.

It is found in the cytoplasm. It carries out the reaction [protein]-peptidylproline (omega=180) = [protein]-peptidylproline (omega=0). Functionally, involved in protein export. Acts as a chaperone by maintaining the newly synthesized protein in an open conformation. Functions as a peptidyl-prolyl cis-trans isomerase. This chain is Trigger factor, found in Natranaerobius thermophilus (strain ATCC BAA-1301 / DSM 18059 / JW/NM-WN-LF).